The following is a 95-amino-acid chain: MTTRGSNDVVHFFDLSLGSGERTQSLLGDLSGSLFTGVSDQIDQSSFIWGQTGDFSNQRSDELGSVGGSTLLVGDLWGWSHLGDFLTLVQTNSDT.

This is an uncharacterized protein from Saccharomyces cerevisiae (strain ATCC 204508 / S288c) (Baker's yeast).